The primary structure comprises 36 residues: Protein usd (36 aa).

Required for translation of SpoIIID. This Bacillus subtilis (strain 168) protein is Protein usd (usd).